Reading from the N-terminus, the 410-residue chain is Dihydrolipoyllysine-residue acetyltransferase component of pyruvate dehydrogenase complex (410 aa).

The region spanning 1 to 69 is the Lipoyl-binding domain; the sequence is MPDIGTDLVE…TTGSLIAILN (69 aa). Lys-35 carries the post-translational modification N6-lipoyllysine. The tract at residues 81-100 is disordered; it reads SSSYSFKNSKNTSTNSNLGN. A Peripheral subunit-binding (PSBD) domain is found at 113 to 150; sequence HATPTVRRLARKFDIKLENITGTGRKGRILKEDVISYK. Residue His-383 is part of the active site.

Belongs to the 2-oxoacid dehydrogenase family. In terms of assembly, forms a 24-polypeptide structural core with octahedral symmetry. (R)-lipoate serves as cofactor.

It catalyses the reaction N(6)-[(R)-dihydrolipoyl]-L-lysyl-[protein] + acetyl-CoA = N(6)-[(R)-S(8)-acetyldihydrolipoyl]-L-lysyl-[protein] + CoA. In terms of biological role, the pyruvate dehydrogenase complex catalyzes the overall conversion of pyruvate to acetyl-CoA and CO(2). It contains multiple copies of three enzymatic components: pyruvate dehydrogenase (E1), dihydrolipoamide acetyltransferase (E2) and lipoamide dehydrogenase (E3). This Buchnera aphidicola subsp. Baizongia pistaciae (strain Bp) protein is Dihydrolipoyllysine-residue acetyltransferase component of pyruvate dehydrogenase complex (aceF).